Here is a 709-residue protein sequence, read N- to C-terminus: Phosphoribosylformylglycinamidine synthase subunit PurL (709 aa).

His36 is an active-site residue. ATP-binding residues include Tyr39 and Lys80. Glu82 is a binding site for Mg(2+). Residues Ser83–His86 and Arg105 contribute to the substrate site. Catalysis depends on His84, which acts as the Proton acceptor. Asp106 is a Mg(2+) binding site. Gln226 provides a ligand contact to substrate. A Mg(2+)-binding site is contributed by Asp252. Glu294–Gln296 lines the substrate pocket. ATP is bound by residues Asp470 and Gly507. A substrate-binding site is contributed by Ser510.

It belongs to the FGAMS family. Monomer. Part of the FGAM synthase complex composed of 1 PurL, 1 PurQ and 2 PurS subunits.

The protein localises to the cytoplasm. The enzyme catalyses N(2)-formyl-N(1)-(5-phospho-beta-D-ribosyl)glycinamide + L-glutamine + ATP + H2O = 2-formamido-N(1)-(5-O-phospho-beta-D-ribosyl)acetamidine + L-glutamate + ADP + phosphate + H(+). It participates in purine metabolism; IMP biosynthesis via de novo pathway; 5-amino-1-(5-phospho-D-ribosyl)imidazole from N(2)-formyl-N(1)-(5-phospho-D-ribosyl)glycinamide: step 1/2. Its function is as follows. Part of the phosphoribosylformylglycinamidine synthase complex involved in the purines biosynthetic pathway. Catalyzes the ATP-dependent conversion of formylglycinamide ribonucleotide (FGAR) and glutamine to yield formylglycinamidine ribonucleotide (FGAM) and glutamate. The FGAM synthase complex is composed of three subunits. PurQ produces an ammonia molecule by converting glutamine to glutamate. PurL transfers the ammonia molecule to FGAR to form FGAM in an ATP-dependent manner. PurS interacts with PurQ and PurL and is thought to assist in the transfer of the ammonia molecule from PurQ to PurL. The sequence is that of Phosphoribosylformylglycinamidine synthase subunit PurL from Saccharolobus islandicus (strain M.14.25 / Kamchatka #1) (Sulfolobus islandicus).